Here is a 1423-residue protein sequence, read N- to C-terminus: Interphotoreceptor matrix proteoglycan 2 (1423 aa).

An N-terminal signal peptide occupies residues 1 to 27 (MFAFLWKISLCLLVLGVITGDPQAVAA). At 28–1289 (EEKQAKDASP…EYVSEPLVVG (1262 aa)) the chain is on the extracellular side. N-linked (GlcNAc...) asparagine glycosylation is present at N150. The SEA 1 domain occupies 245 to 358 (TEQMIEFSIV…NPTVVYTISD (114 aa)). The segment at 265–273 (SDPDTAKYQ) is hyaluronan-binding motif involved in chondroitin sulfate A-binding. N-linked (GlcNAc...) asparagine glycans are attached at residues N325 and N375. Disordered stretches follow at residues 423–469 (AERP…DSEV), 522–559 (DSSD…DYTA), and 577–602 (TKRT…ADSL). Over residues 523-532 (SSDEFEDTGL) the composition is skewed to acidic residues. A compositionally biased stretch (low complexity) spans 537–546 (LLPSSPSSHL). Positions 577-587 (TKRTVTAEKEV) are enriched in basic and acidic residues. An N-linked (GlcNAc...) asparagine glycan is attached at N676. The tract at residues 886 to 907 (FEVSTDTSTEEQQSLDSSLADR) is disordered. Over residues 889–902 (STDTSTEEQQSLDS) the composition is skewed to polar residues. In terms of domain architecture, SEA 2 spans 1083–1196 (RALVVFFSLR…YSLDVESGEQ (114 aa)). N-linked (GlcNAc...) asparagine glycosylation is found at N1128, N1142, and N1160. 2 consecutive EGF-like domains span residues 1196–1234 (QADP…IDGL) and 1237–1279 (NSIC…EHCE). Cystine bridges form between C1200-C1211, C1205-C1222, C1240-C1253, C1247-C1263, and C1265-C1278. Residues 1266 to 1274 (RVGENWWYR) are hyaluronan-binding motif involved in chondroitin sulfate C-binding. A helical transmembrane segment spans residues 1290 to 1310 (IAIASVAGFLLVASAVIFFLA). Residues 1311–1423 (RTLRDQYTKS…FVRQHQMKLL (113 aa)) lie on the Cytoplasmic side of the membrane. The tract at residues 1322–1327 (TEDSQG) is hyaluronan-binding motif involved in chondroitin sulfate C-binding.

Post-translationally, highly glycosylated (N- and O-linked carbohydrates). Expressed in retina.

It is found in the photoreceptor outer segment membrane. The protein localises to the photoreceptor inner segment membrane. The protein resides in the secreted. It localises to the extracellular space. Its subcellular location is the extracellular matrix. It is found in the interphotoreceptor matrix. Chondroitin sulfate- and hyaluronan-binding proteoglycan involved in the organization of interphotoreceptor matrix. The sequence is that of Interphotoreceptor matrix proteoglycan 2 (IMPG2) from Gallus gallus (Chicken).